The primary structure comprises 219 residues: Nodulation protein NolA (219 aa).

An HTH merR-type domain is found at Arg10 to Gly79. A DNA-binding region (H-T-H motif) is located at residues Ile13–His32.

Involved in genotype-specific nodulation of soybeans. This is Nodulation protein NolA (nolA) from Bradyrhizobium elkanii.